Consider the following 464-residue polypeptide: Integrator complex subunit 12 (464 aa).

The tract at residues 42 to 98 (GNDSVYRPQPKEVEQPKAMLSKVKPETKASSSTPSSSILSKPLASEKVKKEAEKRTA) is disordered. A compositionally biased stretch (low complexity) spans 69–84 (KASSSTPSSSILSKPL). Residues 85–98 (ASEKVKKEAEKRTA) are compositionally biased toward basic and acidic residues. A PHD-type zinc finger spans residues 156 to 212 (GLACVVCRQMTVFSGNQLVECQECHNLYHQDCHRPQVTDKDVNDPRLVWYCARCTRQ). Disordered regions lie at residues 216–252 (MAQKNQKPSQKPAPSAVSAVTPVAKDPSVNKPELKSK) and 312–445 (TNSQ…SQLN). Residues 227–239 (PAPSAVSAVTPVA) show a composition bias toward low complexity. Polar residues predominate over residues 312 to 329 (TNSQATSGKPPSLSSVQK). The span at 339–371 (SKAGSVSKSGSGGSSSTIPLKPLPPLILGKTGL) shows a compositional bias: low complexity. Polar residues predominate over residues 372–382 (SRSMSSDNVSK). The segment covering 384–421 (GLPSPNPSSSGSVSSLSSQLGSNNGSSNTAGSNVNSSN) has biased composition (low complexity). Residues 428–445 (SMQQSGAKGPTSQESQLN) are compositionally biased toward polar residues.

Belongs to the Integrator subunit 12 family. In terms of assembly, component of the Integrator complex, composed of core subunits INTS1, INTS2, INTS3, INTS4, INTS5, INTS6, INTS7, INTS8, INTS9/RC74, INTS10, INTS11/CPSF3L, INTS12, INTS13, INTS14 and INTS15. The core complex associates with protein phosphatase 2A subunits PPP2CA and PPP2R1A, to form the Integrator-PP2A (INTAC) complex.

It is found in the nucleus. In terms of biological role, component of the integrator complex, a multiprotein complex that terminates RNA polymerase II (Pol II) transcription in the promoter-proximal region of genes. The integrator complex provides a quality checkpoint during transcription elongation by driving premature transcription termination of transcripts that are unfavorably configured for transcriptional elongation: the complex terminates transcription by (1) catalyzing dephosphorylation of the C-terminal domain (CTD) of Pol II subunit POLR2A/RPB1 and SUPT5H/SPT5, (2) degrading the exiting nascent RNA transcript via endonuclease activity and (3) promoting the release of Pol II from bound DNA. The integrator complex is also involved in terminating the synthesis of non-coding Pol II transcripts, such as enhancer RNAs (eRNAs), small nuclear RNAs (snRNAs), telomerase RNAs and long non-coding RNAs (lncRNAs). This is Integrator complex subunit 12 (ints12) from Xenopus laevis (African clawed frog).